Reading from the N-terminus, the 112-residue chain is MKLITAIVKPFTLDDVKTSLEDAGVLGMTVSEIQGYGRQKGHTEVYRGAEYSVDFVPKVRIEVVVDDSIVDKVVDSIVRAARTGKIGDGKVWVSPVDTIVRVRTGERGHDAL.

The residue at position 51 (Tyr51) is an O-UMP-tyrosine.

This sequence belongs to the P(II) protein family. In terms of assembly, homotrimer.

Its function is as follows. In nitrogen-limiting conditions, when the ratio of Gln to 2-ketoglutarate decreases, P-II is uridylylated to P-II-UMP. P-II-UMP allows the deadenylation of glutamine synthetase (GS), thus activating the enzyme. Conversely, in nitrogen excess P-II is deuridylated and promotes the adenylation of GS. P-II indirectly controls the transcription of the GS gene (glnA). P-II prevents NR-II-catalyzed conversion of NR-I to NR-I-phosphate, the transcriptional activator of glnA. When P-II is uridylylated to P-II-UMP, these events are reversed. The polypeptide is Nitrogen regulatory protein P-II (glnB) (Mycobacterium bovis (strain ATCC BAA-935 / AF2122/97)).